The primary structure comprises 995 residues: Epididymis-specific alpha-mannosidase (995 aa).

The first 21 residues, 1–21 (MGPHSWLPLFMQLALLGPQWA), serve as a signal peptide directing secretion. Positions 36, 38, and 151 each coordinate Zn(2+). Asp151 functions as the Nucleophile in the catalytic mechanism. Residue Asn285 is glycosylated (N-linked (GlcNAc...) asparagine). His411 contributes to the Zn(2+) binding site. 7 N-linked (GlcNAc...) asparagine glycosylation sites follow: Asn593, Asn625, Asn657, Asn733, Asn793, Asn875, and Asn977. The interval 956–977 (TEDGHHHRGSSRRPLPPLRGPN) is disordered.

It belongs to the glycosyl hydrolase 38 family. Requires Zn(2+) as cofactor. Post-translationally, processed into a 27 kDa fragment localized on the equatorial segment and the apical rim of the head of mature sperm. In terms of tissue distribution, specific to the caput and corpus of the epididymis.

It localises to the secreted. It carries out the reaction Hydrolysis of terminal, non-reducing alpha-D-mannose residues in alpha-D-mannosides.. Its function is as follows. Can digest both p-nitro-phenyl-alpha-D-mannoside and high mannose oligosaccharide (Man(8)-GlcNAc(2)). May be involved in sperm maturation. Has a possible role in specific sperm-egg interaction since sperm surface mannosidase acts like a receptor for mannose-containing oligosaccharides located on the zona pellucida. The chain is Epididymis-specific alpha-mannosidase (MAN2B2) from Sus scrofa (Pig).